Consider the following 84-residue polypeptide: Mu-Sparatoxin-Hp1 (84 aa).

An N-terminal signal peptide occupies residues 1–20 (MKIAIVMTLLLVAFSTASFA). Positions 21–35 (IEPIERAALDLVMAR) are excised as a propeptide. Cystine bridges form between Cys54-Cys68, Cys61-Cys73, and Cys67-Cys78. Leu82 is subject to Leucine amide.

Expressed by the venom gland.

It localises to the secreted. Weakly nhibits voltage-gated sodium channels Nav1.7/SCN9A. High concentration of the toxin (3 uM) inhibits Nav1.7/SCN9A currents by 79%. The polypeptide is Mu-Sparatoxin-Hp1 (Heteropoda pingtungensis (Pingtung huntsman spider)).